Reading from the N-terminus, the 449-residue chain is MTAASQISMSARHLGYTRGGPDVPVESLKITNELLQKNHDELHIFFRDMNGHNHLVHNLFTRLALGATPEQLRTAFNDDLPTQRGIPSLDQDVVDKMHDDDFFSERITKINHYNNFMVFFEKEIASKGWQTVVNQYIFSKSRVAEALLPLMYDGAYHPIIHLGLGVEFEQPAVIAEALAQAAAHDSFDTDWFFQSAEQGALESQSGASPSSSESTLLELARETAQDNTIRDAARTPGLIGTMKMKKAIYPKAGKQLLSLASRFRVTKETLKQKTAEMVNFCAYLAGCAQRRDRATKVDFFFMHCVTSSLCLSVLAQQPWIDIADRVRLIEWKGRLDLAWYVTCGVPDLDLDHVKTYQAGVERGWDDIFALVSDQHDDGHVAKFVRALKHGEDICQQFEDGDASKAFPIRGDMWQVIARMAYDSTLNLPPPAKWVIMAGMDQAWVSVPEK.

The protein belongs to the questin oxidase family.

The protein operates within secondary metabolite biosynthesis. In terms of biological role, baeyer-Villiger oxidase; part of the gene cluster that mediates the biosynthesis of dibenzodioxocinones such as pestalotiollide B, a novel class of inhibitors against cholesterol ester transfer protein (CEPT). The biosynthesis initiates from condensation of acetate and malonate units catalyzed by the non-reducing PKS pks8/GME11356. Pks8/GME11356 lacks a thioesterase (TE) domain, which is important to the cyclizing of the third ring of atrochrysone carboxylic acid, and the esterase GME11355 might play the role of TE and catalyzes the cyclization reaction of the C ring. The lactamase-like protein GME11357 (or other beta-lactamases in Pestalotiopsis microspora) probably hydrolyzes the thioester bond between the ACP of pks8/GME11356 and the intermediate to release atrochrysone carboxylic acid, which is spontaneously dehydrates to form endocrocin anthrone. Endocrocin anthrone is further converted to emodin via the endocrocin intermediate. Emodin is then oxidized by several enzymes such as the Baeyer-Villiger oxidase GME11358, the oxidoreductase GME11367, the short chain dehydrogenase/reductase GME11373, as well as by other oxidoreductases from the cluster, to modify the A and C rings and open the B ring, and finally yield monodictyphenone. The prenyltransferase GME11375 may catalyze the addition reaction between the C5 side chains and the carbon bone of dibenzodioxocinones. The remaining biochemical reactions to the final product dibenzodioxocinones should be methylation catalyzed by methyltransferase GME11366 and reduction and lactonization reaction catalyzed by a series of oxidordeuctases. The sequence is that of Baeyer-Villiger oxidase GME11358 from Pestalotiopsis microspora.